The sequence spans 51 residues: UPF0391 membrane protein PsycPRwf_2202 (51 aa).

2 helical membrane-spanning segments follow: residues 6–26 (IIFAVIALLASLLGFGGVAGL) and 27–47 (SQNFAYIFLVVAVILFIIGFI).

The protein belongs to the UPF0391 family.

The protein resides in the cell membrane. In Psychrobacter sp. (strain PRwf-1), this protein is UPF0391 membrane protein PsycPRwf_2202.